A 516-amino-acid polypeptide reads, in one-letter code: Cytochrome P450 93G1 (516 aa).

A helical membrane pass occupies residues 11 to 31 (LLGMGTTMGALALALVVVVVV). A heme-binding site is contributed by Cys-454.

Belongs to the cytochrome P450 family. The cofactor is heme.

It is found in the membrane. It catalyses the reaction a flavanone + reduced [NADPH--hemoprotein reductase] + O2 = a flavone + oxidized [NADPH--hemoprotein reductase] + 2 H2O + H(+). The protein operates within secondary metabolite biosynthesis; flavonoid biosynthesis. Its function is as follows. Functions as a flavone synthase II (FNSII) that catalyzes the direct conversion of flavanones to flavones. In vitro, can convert naringenin and eriodictyol to apigenin and luteolin, respectively. Acts as a key branch point enzyme that channels flavanones to the biosynthesis of soluble tricin O-linked conjugates. This Oryza sativa subsp. japonica (Rice) protein is Cytochrome P450 93G1.